The chain runs to 39 residues: Cytochrome b6-f complex subunit 5 (39 aa).

A helical transmembrane segment spans residues Leu5–Ala25.

This sequence belongs to the PetG family. The 4 large subunits of the cytochrome b6-f complex are cytochrome b6, subunit IV (17 kDa polypeptide, PetD), cytochrome f and the Rieske protein, while the 4 small subunits are PetG, PetL, PetM and PetN. The complex functions as a dimer.

Its subcellular location is the cellular thylakoid membrane. Component of the cytochrome b6-f complex, which mediates electron transfer between photosystem II (PSII) and photosystem I (PSI), cyclic electron flow around PSI, and state transitions. PetG is required for either the stability or assembly of the cytochrome b6-f complex. This Prochlorococcus marinus (strain MIT 9515) protein is Cytochrome b6-f complex subunit 5.